The primary structure comprises 384 residues: PqqA peptide cyclase (384 aa).

One can recognise a Radical SAM core domain in the interval isoleucine 14–glutamine 230. Cysteine 28, cysteine 32, and cysteine 35 together coordinate [4Fe-4S] cluster.

The protein belongs to the radical SAM superfamily. PqqE family. Interacts with PqqD. The interaction is necessary for activity of PqqE. The cofactor is [4Fe-4S] cluster.

It catalyses the reaction [PQQ precursor protein] + S-adenosyl-L-methionine = E-Y cross-linked-[PQQ precursor protein] + 5'-deoxyadenosine + L-methionine + H(+). Its pathway is cofactor biosynthesis; pyrroloquinoline quinone biosynthesis. Functionally, catalyzes the cross-linking of a glutamate residue and a tyrosine residue in the PqqA protein as part of the biosynthesis of pyrroloquinoline quinone (PQQ). The protein is PqqA peptide cyclase of Methylorubrum extorquens (strain CM4 / NCIMB 13688) (Methylobacterium extorquens).